Consider the following 393-residue polypeptide: Thermostable carboxypeptidase 2 (393 aa).

Zn(2+)-binding residues include His-104, Asp-109, and His-245. Tyr-302 (proton donor) is an active-site residue. The Nucleophile role is filled by Glu-373.

This sequence belongs to the peptidase M20 family. Homotetramer. Zn(2+) serves as cofactor.

Functionally, can release basic, acidic, aromatic, and, to a lesser extent, aliphatic amino acids. The protein is Thermostable carboxypeptidase 2 (cpsA2) of Saccharolobus solfataricus (strain ATCC 35092 / DSM 1617 / JCM 11322 / P2) (Sulfolobus solfataricus).